A 172-amino-acid chain; its full sequence is Avenin-like a4 (172 aa).

The signal sequence occupies residues 1–19 (MKTMFILALIALAATSVVA).

The protein belongs to the prolamin family. Post-translationally, contains 7 disulfide bonds.

Functionally, seed storage protein. Not integrated in the gluten polymer through disulfide bonds, unless incorporated by reduction and reoxidation during dough making. Increases dough strength and bread volume, but decreases dough stability when added into a base wheat flour. This Triticum aestivum (Wheat) protein is Avenin-like a4.